A 238-amino-acid polypeptide reads, in one-letter code: Lactate utilization protein A (238 aa).

The protein belongs to the LutA/YkgE family.

In terms of biological role, is involved in L-lactate degradation and allows cells to grow with lactate as the sole carbon source. The protein is Lactate utilization protein A of Anoxybacillus flavithermus (strain DSM 21510 / WK1).